The primary structure comprises 259 residues: Phosphate import ATP-binding protein PstB (259 aa).

The region spanning 13-254 (LEVNNLNFHY…PRLQRTEDYI (242 aa)) is the ABC transporter domain. 45–52 (GPSGCGKS) lines the ATP pocket.

It belongs to the ABC transporter superfamily. Phosphate importer (TC 3.A.1.7) family. The complex is composed of two ATP-binding proteins (PstB), two transmembrane proteins (PstC and PstA) and a solute-binding protein (PstS).

It localises to the cell inner membrane. It catalyses the reaction phosphate(out) + ATP + H2O = ADP + 2 phosphate(in) + H(+). Part of the ABC transporter complex PstSACB involved in phosphate import. Responsible for energy coupling to the transport system. This is Phosphate import ATP-binding protein PstB from Pasteurella multocida (strain Pm70).